The chain runs to 241 residues: MAPK phosphothreonine lyase (241 aa).

Histidine 106 functions as the Proton donor in the catalytic mechanism. The Proton acceptor role is filled by lysine 136.

The protein belongs to the phosphothreonine lyase family.

It localises to the secreted. Its function is as follows. Secreted effector that irreversibly inactivates host MAP kinases by catalyzing the dephosphorylation of the phosphothreonine residue in the pT-X-pY motif present in MAPKs, via a beta-elimination reaction leading to a dehydrobutyrine residue. This is MAPK phosphothreonine lyase (spvC) from Salmonella enteritidis.